The primary structure comprises 23 residues: Defensin-like protein 2 (23 aa).

At Gln1 the chain carries Pyrrolidone carboxylic acid.

It belongs to the DEFL family. As to quaternary structure, forms oligomers in its native state.

Functionally, possesses antifungal activity sensitive to inorganic cations. The chain is Defensin-like protein 2 from Brassica napus (Rape).